Reading from the N-terminus, the 364-residue chain is MTQSNPFQQYGITSGLAAAAAAKASVLAAMGTISDYVGVPTPIGLRIEVKVEMMKQIDARSGIAAVRKFSGDNPDTLNGALFESRAVIRDDGLINIFAGEGIGVAVSDGLPVRRGDPAINPVARMMIENAVREVSGSAGFDVYISVPGGEDLARDTMNPRVGISGGISILGTTGIEEPVSGPDYEAHIEYLLQTGRCVSTVAVMCPGNTAMRFAESYLRLHPASFILTGDRIGSAIEMAIEKGYREIVVFGLPGKLVKMAAGVMNTHSRIADARFETIAAYAALNGADRDTISKILSSNTVESAFAVLRSIGLLDSVAGAIASRIVERLRSPVWQIRRILLRHDRFRRQAIRVSPVAGHIETGE.

It belongs to the CbiD family.

The enzyme catalyses Co-precorrin-5B + S-adenosyl-L-methionine = Co-precorrin-6A + S-adenosyl-L-homocysteine. The protein operates within cofactor biosynthesis; adenosylcobalamin biosynthesis; cob(II)yrinate a,c-diamide from sirohydrochlorin (anaerobic route): step 6/10. Catalyzes the methylation of C-1 in cobalt-precorrin-5B to form cobalt-precorrin-6A. In Thermoplasma acidophilum (strain ATCC 25905 / DSM 1728 / JCM 9062 / NBRC 15155 / AMRC-C165), this protein is Cobalt-precorrin-5B C(1)-methyltransferase.